A 311-amino-acid chain; its full sequence is Ribosomal RNA small subunit methyltransferase H (311 aa).

S-adenosyl-L-methionine is bound by residues 33–35 (AGH), Asp-53, Phe-80, Asp-101, and Gln-108.

Belongs to the methyltransferase superfamily. RsmH family.

The protein localises to the cytoplasm. The enzyme catalyses cytidine(1402) in 16S rRNA + S-adenosyl-L-methionine = N(4)-methylcytidine(1402) in 16S rRNA + S-adenosyl-L-homocysteine + H(+). In terms of biological role, specifically methylates the N4 position of cytidine in position 1402 (C1402) of 16S rRNA. The protein is Ribosomal RNA small subunit methyltransferase H of Geobacter sulfurreducens (strain ATCC 51573 / DSM 12127 / PCA).